We begin with the raw amino-acid sequence, 443 residues long: Glutamate-1-semialdehyde 2,1-aminomutase (443 aa).

Position 281 is an N6-(pyridoxal phosphate)lysine (Lys-281).

Belongs to the class-III pyridoxal-phosphate-dependent aminotransferase family. HemL subfamily. As to quaternary structure, homodimer. Pyridoxal 5'-phosphate serves as cofactor.

Its subcellular location is the cytoplasm. The catalysed reaction is (S)-4-amino-5-oxopentanoate = 5-aminolevulinate. It functions in the pathway porphyrin-containing compound metabolism; protoporphyrin-IX biosynthesis; 5-aminolevulinate from L-glutamyl-tRNA(Glu): step 2/2. The polypeptide is Glutamate-1-semialdehyde 2,1-aminomutase (Leptospira interrogans serogroup Icterohaemorrhagiae serovar Lai (strain 56601)).